Here is a 214-residue protein sequence, read N- to C-terminus: Superoxide dismutase [Mn] (214 aa).

Mn(2+) is bound by residues histidine 27, histidine 82, aspartate 169, and histidine 173.

This sequence belongs to the iron/manganese superoxide dismutase family. In terms of assembly, homodimer. Mn(2+) serves as cofactor.

The catalysed reaction is 2 superoxide + 2 H(+) = H2O2 + O2. Its function is as follows. Destroys superoxide anion radicals which are normally produced within the cells and which are toxic to biological systems. The polypeptide is Superoxide dismutase [Mn] (sodA) (Pasteurella multocida (strain Pm70)).